The chain runs to 441 residues: UDP-N-acetylglucosamine--N-acetylmuramyl-(pentapeptide) pyrophosphoryl-undecaprenol N-acetylglucosamine transferase (441 aa).

UDP-N-acetyl-alpha-D-glucosamine is bound by residues 28–30 (TGG), Asn140, Arg176, Ser204, Ile257, and Gln302.

Belongs to the glycosyltransferase 28 family. MurG subfamily.

The protein resides in the cell inner membrane. It catalyses the reaction di-trans,octa-cis-undecaprenyl diphospho-N-acetyl-alpha-D-muramoyl-L-alanyl-D-glutamyl-meso-2,6-diaminopimeloyl-D-alanyl-D-alanine + UDP-N-acetyl-alpha-D-glucosamine = di-trans,octa-cis-undecaprenyl diphospho-[N-acetyl-alpha-D-glucosaminyl-(1-&gt;4)]-N-acetyl-alpha-D-muramoyl-L-alanyl-D-glutamyl-meso-2,6-diaminopimeloyl-D-alanyl-D-alanine + UDP + H(+). The protein operates within cell wall biogenesis; peptidoglycan biosynthesis. Functionally, cell wall formation. Catalyzes the transfer of a GlcNAc subunit on undecaprenyl-pyrophosphoryl-MurNAc-pentapeptide (lipid intermediate I) to form undecaprenyl-pyrophosphoryl-MurNAc-(pentapeptide)GlcNAc (lipid intermediate II). The chain is UDP-N-acetylglucosamine--N-acetylmuramyl-(pentapeptide) pyrophosphoryl-undecaprenol N-acetylglucosamine transferase from Xanthomonas oryzae pv. oryzae (strain MAFF 311018).